The primary structure comprises 306 residues: tRNA N6-adenosine threonylcarbamoyltransferase (306 aa).

Residues H110 and H114 each coordinate Fe cation. Substrate-binding positions include 132–136 (IASGK), D165, G178, D182, and N268. Fe cation is bound at residue D292.

Belongs to the KAE1 / TsaD family. The cofactor is Fe(2+).

It localises to the cytoplasm. The enzyme catalyses L-threonylcarbamoyladenylate + adenosine(37) in tRNA = N(6)-L-threonylcarbamoyladenosine(37) in tRNA + AMP + H(+). Its function is as follows. Required for the formation of a threonylcarbamoyl group on adenosine at position 37 (t(6)A37) in tRNAs that read codons beginning with adenine. Is involved in the transfer of the threonylcarbamoyl moiety of threonylcarbamoyl-AMP (TC-AMP) to the N6 group of A37, together with TsaE and TsaB. TsaD likely plays a direct catalytic role in this reaction. The polypeptide is tRNA N6-adenosine threonylcarbamoyltransferase (Malacoplasma penetrans (strain HF-2) (Mycoplasma penetrans)).